The primary structure comprises 426 residues: Glutamate-1-semialdehyde 2,1-aminomutase (426 aa).

K265 carries the post-translational modification N6-(pyridoxal phosphate)lysine.

The protein belongs to the class-III pyridoxal-phosphate-dependent aminotransferase family. HemL subfamily. As to quaternary structure, homodimer. It depends on pyridoxal 5'-phosphate as a cofactor.

It localises to the cytoplasm. The enzyme catalyses (S)-4-amino-5-oxopentanoate = 5-aminolevulinate. The protein operates within porphyrin-containing compound metabolism; protoporphyrin-IX biosynthesis; 5-aminolevulinate from L-glutamyl-tRNA(Glu): step 2/2. This is Glutamate-1-semialdehyde 2,1-aminomutase from Alteromonas mediterranea (strain DSM 17117 / CIP 110805 / LMG 28347 / Deep ecotype).